Reading from the N-terminus, the 113-residue chain is uncharacterized protein (113 aa).

This is an uncharacterized protein from Bacillus subtilis (strain 168).